The following is a 193-amino-acid chain: Xanthine phosphoribosyltransferase (193 aa).

Residues Leu-20 and Asn-27 each contribute to the xanthine site. 128–132 (ASGGT) is a binding site for 5-phospho-alpha-D-ribose 1-diphosphate. Lys-156 lines the xanthine pocket.

This sequence belongs to the purine/pyrimidine phosphoribosyltransferase family. Xpt subfamily. In terms of assembly, homodimer.

The protein localises to the cytoplasm. The catalysed reaction is XMP + diphosphate = xanthine + 5-phospho-alpha-D-ribose 1-diphosphate. It functions in the pathway purine metabolism; XMP biosynthesis via salvage pathway; XMP from xanthine: step 1/1. Functionally, converts the preformed base xanthine, a product of nucleic acid breakdown, to xanthosine 5'-monophosphate (XMP), so it can be reused for RNA or DNA synthesis. The polypeptide is Xanthine phosphoribosyltransferase (Deinococcus deserti (strain DSM 17065 / CIP 109153 / LMG 22923 / VCD115)).